Here is a 395-residue protein sequence, read N- to C-terminus: Hdr-like menaquinol oxidoreductase integral membrane subunit (395 aa).

The next 10 membrane-spanning stretches (helical) occupy residues 15–35, 57–77, 88–108, 126–146, 158–178, 196–216, 231–251, 274–294, 305–325, and 364–384; these read YFAL…AYVL, IPYF…AGVF, IAAY…ALDI, IFSW…IYLL, FMAG…GAIY, FIVC…YFTF, LALI…VEGL, VFWS…IIVL, ITFA…YLII, and IGLI…FALI.

The protein belongs to the NrfD family. In terms of assembly, consists of five subunits: an integral membrane subunit, a cytochrome b-like subunit, a cytochrome c subunit and two iron-sulfur subunits.

The protein resides in the cell membrane. Has menaquinol-oxidizing activity. HmeB subunit may function as a menaquinol-oxidizing site. HmeA, HmeB and HmeE subunits may together catalyze electron transfer from menaquinol to cytochrome c. This Archaeoglobus fulgidus (strain ATCC 49558 / DSM 4304 / JCM 9628 / NBRC 100126 / VC-16) protein is Hdr-like menaquinol oxidoreductase integral membrane subunit (hmeB).